The following is a 193-amino-acid chain: Major intrinsically disordered NOTCH2-binding receptor 1-like homolog (193 aa).

The residue at position 82 (serine 82) is a Phosphoserine. Asparagine 128 carries N-linked (GlcNAc...) asparagine glycosylation. A helical transmembrane segment spans residues 172 to 192 (GLILLLVASILVTIVTLSTIF).

The protein belongs to the MINAR family. As to quaternary structure, interacts with NOTCH2. As to expression, widely expressed in the cortex and Purkinje cells of cerebellum. Expressed in the inner ear, mainly in the hair cells, spiral ganglia, the spiral limbus, and the stria vascularis.

Its subcellular location is the lysosome membrane. The protein localises to the endoplasmic reticulum membrane. Binds cholesterol and may regulate the distribution and homeostasis of cholesterol in hair cells. May play a role in angiogenesis. This chain is Major intrinsically disordered NOTCH2-binding receptor 1-like homolog, found in Mus musculus (Mouse).